Reading from the N-terminus, the 573-residue chain is Proline--tRNA ligase (573 aa).

Belongs to the class-II aminoacyl-tRNA synthetase family. ProS type 1 subfamily. In terms of assembly, homodimer.

It is found in the cytoplasm. The enzyme catalyses tRNA(Pro) + L-proline + ATP = L-prolyl-tRNA(Pro) + AMP + diphosphate. In terms of biological role, catalyzes the attachment of proline to tRNA(Pro) in a two-step reaction: proline is first activated by ATP to form Pro-AMP and then transferred to the acceptor end of tRNA(Pro). As ProRS can inadvertently accommodate and process non-cognate amino acids such as alanine and cysteine, to avoid such errors it has two additional distinct editing activities against alanine. One activity is designated as 'pretransfer' editing and involves the tRNA(Pro)-independent hydrolysis of activated Ala-AMP. The other activity is designated 'posttransfer' editing and involves deacylation of mischarged Ala-tRNA(Pro). The misacylated Cys-tRNA(Pro) is not edited by ProRS. The polypeptide is Proline--tRNA ligase (Cupriavidus necator (strain ATCC 17699 / DSM 428 / KCTC 22496 / NCIMB 10442 / H16 / Stanier 337) (Ralstonia eutropha)).